Reading from the N-terminus, the 944-residue chain is Leucine--tRNA ligase 2 (944 aa).

Residues 36–46 (PYPNSPWHIGH) carry the 'HIGH' region motif. A 'KMSKS' region motif is present at residues 623-627 (KMSKS). An ATP-binding site is contributed by Lys-626.

This sequence belongs to the class-I aminoacyl-tRNA synthetase family.

The protein localises to the cytoplasm. It carries out the reaction tRNA(Leu) + L-leucine + ATP = L-leucyl-tRNA(Leu) + AMP + diphosphate. The protein is Leucine--tRNA ligase 2 of Saccharolobus solfataricus (strain ATCC 35092 / DSM 1617 / JCM 11322 / P2) (Sulfolobus solfataricus).